Consider the following 785-residue polypeptide: MGASHLHDDPRPGSPVDHQPTTWGGIIKKWPKQTFLIVGNELCERFSFYGMRAVLTLYFFNILNFSQSFSTVLFHAFTVICYSSPLLGSILADGYIGKFWTIFFISIFYACGQILLAFSSIAPSGSSHHPLLDLLGLLIVGLGTGGIKPCVSAFGGDQFPAHYTRMISLFFSMFYFSINAGSLISMWLTPYFRSMSCFGHDSCYPLAFGIPAILMIVATLVFMAGSFWYKKVPPKENIIFKVIGTITTALRKKASSSSTHQRSHWLEYSLDGHDCALSTECKNLHGNCAQRRYIEDIKRLFRVIVMMIPVPMFWALYDQQGSTWVLQAVGMDAKVFGFEILPDQMGVLNAFLILFFIPIFQSIVYPTIEKLGFQMTMLRKMAGGGILTAVSFFVCGIVQLFVNPTLPYIPMANEAHLTIINTIPSCDFNVLIDSREPFDLLRKSGIAPDDSVRKPISFTGDDFFQPNITFDNLAPNCPKFTAEPMLAPATSYVLTLSPNGWAYNAVRPEKPKSGKGELSMGLNLIVPCDKIPSNVTWEQCNGTEGYSGAIALCKVESDVITDNNNVCDPTAKGKFYVLSNANPLDVHDFSKKSTVTAFGRTYSPIEMKPGTYRLFYTDDSRTHFTPLNLPPVQQDHMGGQYLITVSTRSKNDSEVLATTESLVSYNRVSILWQIPQYVILTAGEVLFSITGLEFAYTEASPQLKSVVQALWLFTTAIGDLIVVVIFMLNIFSDVAVQMFVFGGIMLFVIFVFILLAVFYYEYADYSNESEVLTEKMIVDDDHTRI.

9 helical membrane-spanning segments follow: residues 46–66, 72–92, 99–119, 134–154, 167–187, 208–228, 303–323, 345–365, and 382–402; these read FSFY…LNFS, VLFH…SILA, FWTI…LAFS, LLGL…VSAF, ISLF…ISMW, FGIP…GSFW, VIVM…QGST, MGVL…SIVY, and AGGG…QLFV. N-linked (GlcNAc...) asparagine glycosylation occurs at N467. A run of 3 helical transmembrane segments spans residues 670–690, 711–731, and 738–758; these read ILWQ…FSIT, WLFT…LNIF, and MFVF…LAVF.

The protein belongs to the major facilitator superfamily. Proton-dependent oligopeptide transporter (POT/PTR) (TC 2.A.17) family. As to expression, expressed in vulval, pharyngeal and anal muscles.

It localises to the membrane. Functionally, proton-dependent uptake of di- or tripeptides, and to a minor extent tetrapeptides. Transport is independent of sodium and chloride ions. Protein shows high affinity to peptide substrates. The polypeptide is Peptide transporter family 2 (pept-2) (Caenorhabditis elegans).